The sequence spans 129 residues: Small ribosomal subunit protein uS9 (129 aa).

The protein belongs to the universal ribosomal protein uS9 family.

The chain is Small ribosomal subunit protein uS9 from Chlorobium limicola (strain DSM 245 / NBRC 103803 / 6330).